The primary structure comprises 490 residues: Cytochrome P450 2C26 (490 aa).

Residue Cys-435 coordinates heme.

This sequence belongs to the cytochrome P450 family. Heme serves as cofactor.

Its subcellular location is the endoplasmic reticulum membrane. The protein resides in the microsome membrane. It carries out the reaction an organic molecule + reduced [NADPH--hemoprotein reductase] + O2 = an alcohol + oxidized [NADPH--hemoprotein reductase] + H2O + H(+). Catalyzes the hydroxylation of tolbutamide and the N-demethylation of aminopyrine and benzphetamine. In Mesocricetus auratus (Golden hamster), this protein is Cytochrome P450 2C26 (CYP2C26).